Reading from the N-terminus, the 27-residue chain is Dermaseptin-like peptide (27 aa).

In terms of biological role, has antimicrobial activity against the Gram-positive bacterium M.luteus and the yeast C.albicans. Has hemolytic activity on human and duck erythrocytes. In Schistosoma mansoni (Blood fluke), this protein is Dermaseptin-like peptide.